We begin with the raw amino-acid sequence, 276 residues long: Mitochondrial outer membrane protein porin of 34 kDa (276 aa).

The protein belongs to the eukaryotic mitochondrial porin (TC 1.B.8.1) family.

The protein localises to the mitochondrion outer membrane. Forms a channel through the cell membrane that allows diffusion of small hydrophilic molecules. The channel adopts an open conformation at low or zero membrane potential and a closed conformation at potentials above 30-40 mV. The open state has a weak anion selectivity whereas the closed state is cation-selective. In Solanum tuberosum (Potato), this protein is Mitochondrial outer membrane protein porin of 34 kDa.